We begin with the raw amino-acid sequence, 201 residues long: Superoxide dismutase [Fe] (201 aa).

Residues histidine 27, histidine 79, aspartate 161, and histidine 165 each contribute to the Fe cation site.

Belongs to the iron/manganese superoxide dismutase family. In terms of assembly, homodimer. Fe cation serves as cofactor.

It carries out the reaction 2 superoxide + 2 H(+) = H2O2 + O2. Functionally, destroys superoxide anion radicals which are normally produced within the cells and which are toxic to biological systems. This chain is Superoxide dismutase [Fe] (sodB), found in Synechococcus elongatus (strain ATCC 33912 / PCC 7942 / FACHB-805) (Anacystis nidulans R2).